The sequence spans 215 residues: NAD(P)H-quinone oxidoreductase subunit I (215 aa).

2 4Fe-4S ferredoxin-type domains span residues 55 to 84 and 95 to 124; these read GRIHYEFDKCIACEVCVRVCPINLPVVDWV and RNYSIDFGVCIFCGNCVEYCPTNCLSMTEE. 8 residues coordinate [4Fe-4S] cluster: Cys64, Cys67, Cys70, Cys74, Cys104, Cys107, Cys110, and Cys114. Basic and acidic residues predominate over residues 169–180; that stretch reads MDPHGVASDRPR. Residues 169-215 are disordered; sequence MDPHGVASDRPRAGQLPAQVLETLTPPAKPTAKNDGQSSSEAKEGDA.

The protein belongs to the complex I 23 kDa subunit family. NDH-1 is composed of at least 11 different subunits. Requires [4Fe-4S] cluster as cofactor.

The protein localises to the cellular thylakoid membrane. The catalysed reaction is a plastoquinone + NADH + (n+1) H(+)(in) = a plastoquinol + NAD(+) + n H(+)(out). It catalyses the reaction a plastoquinone + NADPH + (n+1) H(+)(in) = a plastoquinol + NADP(+) + n H(+)(out). Its function is as follows. NDH-1 shuttles electrons from an unknown electron donor, via FMN and iron-sulfur (Fe-S) centers, to quinones in the respiratory and/or the photosynthetic chain. The immediate electron acceptor for the enzyme in this species is believed to be plastoquinone. Couples the redox reaction to proton translocation, and thus conserves the redox energy in a proton gradient. This is NAD(P)H-quinone oxidoreductase subunit I from Synechococcus sp. (strain CC9605).